Reading from the N-terminus, the 261-residue chain is MSRIRQAFAALDGGKALIAYITVGDPDIRTTLALMHGMVANGADILELGVPFSDPMADGPVIQRAAERALANGISLRDVLDVVRKFRETDTQTPVVLMGYLNPVHKMGYREFAQEAAKAGVDGVLTVDSPVETIDPLYRELKDNGVDCIFLIAPTTTEDRIKTIAELAGGFVYYVSLKGVTGAASLDTDEVSRKIEYLHQYIDIPIGVGFGISNAESARKIGRVADAVIVGSRIVKEIENNTGNEAAAVGALVKELKDAVR.

Active-site proton acceptor residues include Glu47 and Asp58.

Belongs to the TrpA family. In terms of assembly, tetramer of two alpha and two beta chains.

It catalyses the reaction (1S,2R)-1-C-(indol-3-yl)glycerol 3-phosphate + L-serine = D-glyceraldehyde 3-phosphate + L-tryptophan + H2O. Its pathway is amino-acid biosynthesis; L-tryptophan biosynthesis; L-tryptophan from chorismate: step 5/5. In terms of biological role, the alpha subunit is responsible for the aldol cleavage of indoleglycerol phosphate to indole and glyceraldehyde 3-phosphate. The sequence is that of Tryptophan synthase alpha chain from Neisseria meningitidis serogroup B (strain ATCC BAA-335 / MC58).